The sequence spans 36 residues: Hemoglobin subunit beta (36 aa).

The Globin domain occupies 1–36; the sequence is VCVLAHHFGKEFTPQVQAAYQKVVAGVANALAHKYH. Lys-34 carries the N6-acetyllysine modification.

This sequence belongs to the globin family. As to quaternary structure, heterotetramer of two alpha chains and two beta chains. In terms of tissue distribution, red blood cells.

Functionally, involved in oxygen transport from the lung to the various peripheral tissues. The polypeptide is Hemoglobin subunit beta (HBB) (Pongo pygmaeus (Bornean orangutan)).